The following is a 485-amino-acid chain: uncharacterized protein (485 aa).

3 consecutive transmembrane segments (helical) span residues 284 to 304, 328 to 348, and 353 to 373; these read LLAL…YPLF, LLDL…SFIK, and LALT…YNCL.

Belongs to the CBF/MAK21 family.

Its subcellular location is the membrane. This is an uncharacterized protein from Schizosaccharomyces pombe (strain 972 / ATCC 24843) (Fission yeast).